The sequence spans 73 residues: Large ribosomal subunit protein bL31 (73 aa).

The protein belongs to the bacterial ribosomal protein bL31 family. Type A subfamily. Part of the 50S ribosomal subunit.

In terms of biological role, binds the 23S rRNA. The sequence is that of Large ribosomal subunit protein bL31 from Brucella abortus (strain 2308).